A 327-amino-acid chain; its full sequence is Gamma-resorcylate decarboxylase (327 aa).

Zn(2+) contacts are provided by E8, H10, H164, and D287. D287 is an active-site residue.

The protein belongs to the metallo-dependent hydrolases superfamily. ACMSD family. Homotetramer. The cofactor is Zn(2+).

The catalysed reaction is 2,6-dihydroxybenzoate + H(+) = resorcinol + CO2. It carries out the reaction 2,3-dihydroxybenzoate + H(+) = catechol + CO2. It functions in the pathway aromatic compound metabolism. With respect to regulation, insensitive to oxygen. Decarboxylation and carboxylation are inhibited by AgNO(3) and by diethyl pyrocarbonate, a histidine residue-specific inhibitor. Decarboxylation is also inhibited by HgCl(2) and activated by MgCl(2). Its function is as follows. Involved in the gamma-resorcylate (2,6-dihydroxybenzoate) catabolism. Catalyzes the reversible decarboxylation of gamma-resorcylate to resorcinol. Also catalyzes the decarboxylation of 2,3-dihydroxybenzoate to catechol, but does not act on 2-hydroxybenzoic acid 3-hydroxybenzoic acid, 4-hydroxybenzoic acid, 3,4-dihydroxybenzoic acid, 2,5-dihydroxybenzoic acid, 2,3,4-trihydroxybenzoic acid, 3,4,5-trihydroxybenzoic acid, 4-aminobenzoic acid, o-hydroxyphenylacetic acid and vanillic acid. Resorcinol and catechol can both be carboxylated by the reverse reaction. In Rhizobium radiobacter (Agrobacterium tumefaciens), this protein is Gamma-resorcylate decarboxylase.